The primary structure comprises 755 residues: 1,4-alpha-glucan branching enzyme GlgB (755 aa).

The Nucleophile role is filled by Asp435. Glu488 (proton donor) is an active-site residue.

This sequence belongs to the glycosyl hydrolase 13 family. GlgB subfamily. In terms of assembly, monomer.

The enzyme catalyses Transfers a segment of a (1-&gt;4)-alpha-D-glucan chain to a primary hydroxy group in a similar glucan chain.. It participates in glycan biosynthesis; glycogen biosynthesis. Catalyzes the formation of the alpha-1,6-glucosidic linkages in glycogen by scission of a 1,4-alpha-linked oligosaccharide from growing alpha-1,4-glucan chains and the subsequent attachment of the oligosaccharide to the alpha-1,6 position. The sequence is that of 1,4-alpha-glucan branching enzyme GlgB from Vibrio parahaemolyticus serotype O3:K6 (strain RIMD 2210633).